Here is a 442-residue protein sequence, read N- to C-terminus: Putative FNIP repeat-containing protein L170 (442 aa).

FNIP repeat units follow at residues phenylalanine 213 to glycine 252, phenylalanine 253 to phenylalanine 294, and phenylalanine 295 to tyrosine 348.

The polypeptide is Putative FNIP repeat-containing protein L170 (Acanthamoeba polyphaga mimivirus (APMV)).